Reading from the N-terminus, the 386-residue chain is NADPH-dependent alkenal/one oxidoreductase, chloroplastic (386 aa).

The protein belongs to the zinc-containing alcohol dehydrogenase family. Quinone oxidoreductase subfamily.

It localises to the plastid. Its subcellular location is the chloroplast. Reduces the double bond in short-chain unsaturated carbonyls. Acts preferentially on alpha,beta-unsaturated ketones rather on alpha,beta-unsaturated aldehydes. Has no activity with (E)-2-hexenal and (E)-2-pentenal. Contributes to detoxify stromal reactive carbonyls produced under oxidative stress. The chain is NADPH-dependent alkenal/one oxidoreductase, chloroplastic from Arabidopsis thaliana (Mouse-ear cress).